The following is a 154-amino-acid chain: MSKRNQVSYVRPAEPAFLARFKERVGYREGPTVETKRIQPQPPDEDGDHSDKEDEQPQVVVLKKGDLSVEEVMKIKAEIKAAKADEEPTPADGRIIYRKPVKHPSDEKYSGLTASSKKKKPNEDEVNQDSVKKNSQKQIKNSSLLSFDNEDENE.

Disordered regions lie at residues 23–63 (ERVG…VVLK) and 79–154 (IKAA…DENE). The span at 43-56 (PDEDGDHSDKEDEQ) shows a compositional bias: acidic residues. Phosphoserine is present on Ser50. Lys108 is modified (N6-acetyllysine). Ser146 bears the Phosphoserine mark.

This is an uncharacterized protein from Homo sapiens (Human).